The primary structure comprises 351 residues: Methionine import ATP-binding protein MetN (351 aa).

The ABC transporter domain maps to 4–249 (VQLDHVSVTF…PKAELTQKFV (246 aa)). 41-48 (GFSGAGKS) lines the ATP pocket.

Belongs to the ABC transporter superfamily. Methionine importer (TC 3.A.1.24) family. The complex is composed of two ATP-binding proteins (MetN), two transmembrane proteins (MetI) and a solute-binding protein (MetQ).

The protein resides in the cell membrane. The catalysed reaction is L-methionine(out) + ATP + H2O = L-methionine(in) + ADP + phosphate + H(+). The enzyme catalyses D-methionine(out) + ATP + H2O = D-methionine(in) + ADP + phosphate + H(+). Its function is as follows. Part of the ABC transporter complex MetNIQ involved in methionine import. Responsible for energy coupling to the transport system. This Lactobacillus delbrueckii subsp. bulgaricus (strain ATCC BAA-365 / Lb-18) protein is Methionine import ATP-binding protein MetN.